The following is a 387-amino-acid chain: Anhydro-N-acetylmuramic acid kinase (387 aa).

Residue 17–24 (GTSMDGVD) participates in ATP binding.

The protein belongs to the anhydro-N-acetylmuramic acid kinase family.

The enzyme catalyses 1,6-anhydro-N-acetyl-beta-muramate + ATP + H2O = N-acetyl-D-muramate 6-phosphate + ADP + H(+). It participates in amino-sugar metabolism; 1,6-anhydro-N-acetylmuramate degradation. It functions in the pathway cell wall biogenesis; peptidoglycan recycling. Functionally, catalyzes the specific phosphorylation of 1,6-anhydro-N-acetylmuramic acid (anhMurNAc) with the simultaneous cleavage of the 1,6-anhydro ring, generating MurNAc-6-P. Is required for the utilization of anhMurNAc either imported from the medium or derived from its own cell wall murein, and thus plays a role in cell wall recycling. The protein is Anhydro-N-acetylmuramic acid kinase of Burkholderia pseudomallei (strain K96243).